The chain runs to 952 residues: Valine--tRNA ligase (952 aa).

The 'HIGH' region motif lies at 45-55 (PNVTGSLHMGH). The short motif at 571-575 (KMSKS) is the 'KMSKS' region element. Lys-574 provides a ligand contact to ATP. Residues 894 to 950 (KEIAKADADIARVDLKLADQNFIANAPGEIVEDEKEKREAAAARKAKFVEALERLKA) are a coiled coil.

This sequence belongs to the class-I aminoacyl-tRNA synthetase family. ValS type 1 subfamily. In terms of assembly, monomer.

It localises to the cytoplasm. The catalysed reaction is tRNA(Val) + L-valine + ATP = L-valyl-tRNA(Val) + AMP + diphosphate. Catalyzes the attachment of valine to tRNA(Val). As ValRS can inadvertently accommodate and process structurally similar amino acids such as threonine, to avoid such errors, it has a 'posttransfer' editing activity that hydrolyzes mischarged Thr-tRNA(Val) in a tRNA-dependent manner. In Nitrobacter winogradskyi (strain ATCC 25391 / DSM 10237 / CIP 104748 / NCIMB 11846 / Nb-255), this protein is Valine--tRNA ligase.